A 378-amino-acid polypeptide reads, in one-letter code: C-X-C chemokine receptor type 3-2 (378 aa).

Over Met-1–Pro-47 the chain is Extracellular. N-linked (GlcNAc...) asparagine glycans are attached at residues Asn-3 and Asn-19. The helical transmembrane segment at Val-48–Ile-68 threads the bilayer. Residues Arg-69–Thr-86 lie on the Cytoplasmic side of the membrane. Residues Phe-87–Val-107 traverse the membrane as a helical segment. Residues Glu-108–Lys-121 are Extracellular-facing. A disulfide bond links Cys-120 and Cys-199. The chain crosses the membrane as a helical span at residues Ile-122 to Ser-142. Over Phe-143 to Ala-164 the chain is Cytoplasmic. A helical membrane pass occupies residues Gln-165 to Phe-185. Residues Arg-186–Gln-212 lie on the Extracellular side of the membrane. A helical transmembrane segment spans residues Ile-213–Tyr-233. Topologically, residues Cys-234–Ser-253 are cytoplasmic. The helical transmembrane segment at Leu-254–Leu-274 threads the bilayer. The Extracellular portion of the chain corresponds to Arg-275–Glu-304. The chain crosses the membrane as a helical span at residues Ser-305–Phe-325. Residues Arg-326–Ala-378 are Cytoplasmic-facing.

This sequence belongs to the G-protein coupled receptor 1 family.

It is found in the cell membrane. Functionally, receptor for the C-X-C chemokines cxcl11.1 and cxcl11.6. Promotes macrophage chemotaxis to sites of bacterial infection. The chain is C-X-C chemokine receptor type 3-2 from Danio rerio (Zebrafish).